A 333-amino-acid chain; its full sequence is Holliday junction branch migration complex subunit RuvB (333 aa).

The segment at 1–182 (MDERLLSGES…FGVLSRLEYY (182 aa)) is large ATPase domain (RuvB-L). Residues leucine 21, arginine 22, glycine 63, lysine 66, threonine 67, threonine 68, 129–131 (EDF), arginine 172, tyrosine 182, and arginine 219 each bind ATP. Mg(2+) is bound at residue threonine 67. The tract at residues 183 to 253 (TVDQLSAIVE…ITQMALELLQ (71 aa)) is small ATPAse domain (RuvB-S). The segment at 256–333 (KLGLDHIDHK…EHFGMEMPKV (78 aa)) is head domain (RuvB-H). Arginine 311 and arginine 316 together coordinate DNA.

Belongs to the RuvB family. As to quaternary structure, homohexamer. Forms an RuvA(8)-RuvB(12)-Holliday junction (HJ) complex. HJ DNA is sandwiched between 2 RuvA tetramers; dsDNA enters through RuvA and exits via RuvB. An RuvB hexamer assembles on each DNA strand where it exits the tetramer. Each RuvB hexamer is contacted by two RuvA subunits (via domain III) on 2 adjacent RuvB subunits; this complex drives branch migration. In the full resolvosome a probable DNA-RuvA(4)-RuvB(12)-RuvC(2) complex forms which resolves the HJ.

The protein resides in the cytoplasm. The enzyme catalyses ATP + H2O = ADP + phosphate + H(+). The RuvA-RuvB-RuvC complex processes Holliday junction (HJ) DNA during genetic recombination and DNA repair, while the RuvA-RuvB complex plays an important role in the rescue of blocked DNA replication forks via replication fork reversal (RFR). RuvA specifically binds to HJ cruciform DNA, conferring on it an open structure. The RuvB hexamer acts as an ATP-dependent pump, pulling dsDNA into and through the RuvAB complex. RuvB forms 2 homohexamers on either side of HJ DNA bound by 1 or 2 RuvA tetramers; 4 subunits per hexamer contact DNA at a time. Coordinated motions by a converter formed by DNA-disengaged RuvB subunits stimulates ATP hydrolysis and nucleotide exchange. Immobilization of the converter enables RuvB to convert the ATP-contained energy into a lever motion, pulling 2 nucleotides of DNA out of the RuvA tetramer per ATP hydrolyzed, thus driving DNA branch migration. The RuvB motors rotate together with the DNA substrate, which together with the progressing nucleotide cycle form the mechanistic basis for DNA recombination by continuous HJ branch migration. Branch migration allows RuvC to scan DNA until it finds its consensus sequence, where it cleaves and resolves cruciform DNA. This is Holliday junction branch migration complex subunit RuvB from Bacillus anthracis (strain A0248).